A 54-amino-acid chain; its full sequence is Conotoxin mr5.4b (54 aa).

The first 14 residues, 1–14, serve as a signal peptide directing secretion; that stretch reads ILLLLIASAPSVDA. Residues 15–40 constitute a propeptide that is removed on maturation; the sequence is QLKTKDDVPLASFHANVKRTLQKLLN. E52 bears the 4-carboxyglutamate mark.

The protein belongs to the conotoxin T superfamily. Contains 2 disulfide bonds that can be either 'C1-C3, C2-C4' or 'C1-C4, C2-C3', since these disulfide connectivities have been observed for conotoxins with cysteine framework V (for examples, see AC P0DQQ7 and AC P81755). Expressed by the venom duct.

The protein localises to the secreted. The chain is Conotoxin mr5.4b from Conus marmoreus (Marble cone).